Reading from the N-terminus, the 58-residue chain is Small ribosomal subunit protein bS21 (58 aa).

The segment covering 32–42 has biased composition (basic and acidic residues); it reads VRKREHYEKPS. Residues 32–58 are disordered; sequence VRKREHYEKPSVKKKKKSEAARKRKFK. Basic residues predominate over residues 43-58; it reads VKKKKKSEAARKRKFK.

This sequence belongs to the bacterial ribosomal protein bS21 family.

This Clostridium botulinum (strain Okra / Type B1) protein is Small ribosomal subunit protein bS21.